The chain runs to 158 residues: Cyclic pyranopterin monophosphate synthase (158 aa).

Substrate-binding positions include 75-77 (LCH) and 113-114 (ME). The active site involves Asp128.

This sequence belongs to the MoaC family. Homohexamer; trimer of dimers.

The enzyme catalyses (8S)-3',8-cyclo-7,8-dihydroguanosine 5'-triphosphate = cyclic pyranopterin phosphate + diphosphate. It functions in the pathway cofactor biosynthesis; molybdopterin biosynthesis. Its function is as follows. Catalyzes the conversion of (8S)-3',8-cyclo-7,8-dihydroguanosine 5'-triphosphate to cyclic pyranopterin monophosphate (cPMP). The polypeptide is Cyclic pyranopterin monophosphate synthase (Ralstonia pickettii (strain 12J)).